The following is a 427-amino-acid chain: Homogentisate 1,2-dioxygenase (427 aa).

The Proton acceptor role is filled by histidine 285. Residues histidine 328 and glutamate 334 each coordinate Fe cation. Homogentisate is bound by residues tyrosine 343 and histidine 364. Residue histidine 364 participates in Fe cation binding.

The protein belongs to the homogentisate dioxygenase family. As to quaternary structure, hexamer; dimer of trimers. Requires Fe cation as cofactor.

It catalyses the reaction homogentisate + O2 = 4-maleylacetoacetate + H(+). It functions in the pathway amino-acid degradation; L-phenylalanine degradation; acetoacetate and fumarate from L-phenylalanine: step 4/6. In terms of biological role, involved in the catabolism of homogentisate (2,5-dihydroxyphenylacetate or 2,5-OH-PhAc), a central intermediate in the degradation of phenylalanine and tyrosine. Catalyzes the oxidative ring cleavage of the aromatic ring of homogentisate to yield maleylacetoacetate. The protein is Homogentisate 1,2-dioxygenase of Caulobacter sp. (strain K31).